A 183-amino-acid chain; its full sequence is CASP-like protein UU1 (183 aa).

Over 1 to 33 (MEESQQQSTKFDAPPSPYVPSRVYLAQIYWKKP) the chain is Cytoplasmic. A helical transmembrane segment spans residues 34 to 54 (AIVVLRVLQFVFSLIAFSVMA). Residues 55 to 72 (DLLHDVQGSIKSLSYTVA) lie on the Extracellular side of the membrane. The chain crosses the membrane as a helical span at residues 73–93 (IGVLACAYALAQLSFSLWCVI). Residues 94–118 (RGATSSSGVTPLYQYATFICDQMST) are Cytoplasmic-facing. The helical transmembrane segment at 119 to 139 (YFLISAASATATLIDVSGVCG) threads the bilayer. Topologically, residues 140-156 (SNGSGTNLCSRSTASVT) are extracellular. N-linked (GlcNAc...) asparagine glycosylation is present at Asn-141. Residues 157–177 (FAFLAFLAFSASSVLTGYYLV) form a helical membrane-spanning segment. Residues 178–183 (KCILKA) lie on the Cytoplasmic side of the membrane.

This sequence belongs to the Casparian strip membrane proteins (CASP) family. In terms of assembly, homodimer and heterodimers.

The protein resides in the cell membrane. This chain is CASP-like protein UU1, found in Selaginella moellendorffii (Spikemoss).